We begin with the raw amino-acid sequence, 776 residues long: Intermediate filament protein ifp-1 (776 aa).

The segment at 1–23 (MDSANARDCLLHLARAKLSERQD) is head. One can recognise an IF rod domain in the interval 20–371 (ERQDLVQLND…ELLDRSGDPR (352 aa)). Residues 24-55 (LVQLNDQFVDIIEHVHYMEAEHTALEHDYNLL) are coil 1A. The interval 56–69 (KSGVQSDSSGINEI) is linker 1. A coil 1B region spans residues 70–207 (YNVEIRTVRS…EDNKKIIMNE (138 aa)). Residues 208 to 224 (HKYFVRDRNADRHVFRD) are linker 12. Positions 225–620 (QLRKAIADIR…QRGPHHSSYH (396 aa)) are coil 2. Disordered stretches follow at residues 453-473 (ASPI…DSRS) and 518-544 (NTTQ…SERR). Residues 518–536 (NTTQINNPYASRTPTSSVN) are compositionally biased toward polar residues. The segment at 621-768 (AATGSVSNSI…WFVYTSNTEI (148 aa)) is tail. Residues 653–764 (NFQRFTRWYK…EVKSWFVYTS (112 aa)) enclose the LTD domain.

This sequence belongs to the intermediate filament family.

Its subcellular location is the cytoplasm. Its function is as follows. Cytoplasmic intermediate filaments provide mechanical strength to cells. Not essential protein. The polypeptide is Intermediate filament protein ifp-1 (ifp-1) (Caenorhabditis elegans).